The chain runs to 663 residues: Polyunsaturated fatty acid lipoxygenase ALOX15 (663 aa).

Residues 2–115 (GLYRVRVSTG…ILSLPEGTGR (114 aa)) enclose the PLAT domain. The region spanning 116–663 (TVVDDPQGLF…PSLVENSVAI (548 aa)) is the Lipoxygenase domain. 5 residues coordinate Fe cation: His361, His366, His541, His545, and Ile663.

Belongs to the lipoxygenase family. Interacts with PEBP1; in response to IL13/interleukin-13, prevents the interaction of PEBP1 with RAF1 to activate the ERK signaling cascade. It depends on Fe cation as a cofactor. In terms of tissue distribution, detected in tracheal epithelium.

The protein localises to the cytoplasm. It is found in the cytosol. The protein resides in the cell membrane. It localises to the lipid droplet. It carries out the reaction (5Z,8Z,11Z,14Z)-eicosatetraenoate + O2 = (12S)-hydroperoxy-(5Z,8Z,10E,14Z)-eicosatetraenoate. The enzyme catalyses (5Z,8Z,11Z,14Z)-eicosatetraenoate + O2 = (15S)-hydroperoxy-(5Z,8Z,11Z,13E)-eicosatetraenoate. It catalyses the reaction (9Z,12Z)-octadecadienoate + O2 = (13S)-hydroperoxy-(9Z,11E)-octadecadienoate. The catalysed reaction is (5Z,8Z,11Z,14Z)-eicosatetraenoate + 2 O2 = (14R,15S)-dihydroperoxy-(5Z,8Z,10E,12E)-eicosatetraenoate. It carries out the reaction (5Z,8Z,11Z,14Z)-eicosatetraenoate + 2 O2 = (8S,15S)-dihydroperoxy-(5Z,9E,11Z,13E)-eicosatetraenoate. The enzyme catalyses (14S,15R)-epoxy-(5Z,8Z,11Z)-eicosatrienoate + O2 = (8S)-hydroperoxy-(14S,15R)-epoxy-(5Z,9E,11Z)-eicosatrienoate. It catalyses the reaction (14S,15R)-epoxy-(5Z,8Z,11Z)-eicosatrienoate + O2 = (12S)-hydroperoxy-(14S,15R)-epoxy-(5Z,8Z,10E)-eicosatrienoate. The catalysed reaction is (14R,15S)-epoxy-(5Z,8Z,11Z)-eicosatrienoate + O2 = (5S)-hydroperoxy-(14R,15S)-epoxy-(6E,8Z,11Z)-eicosatrienoate. It carries out the reaction (14R,15S)-epoxy-(5Z,8Z,11Z)-eicosatrienoate + O2 = (12S)-hydroperoxy-(14R,15S)-epoxy-(5Z,8Z,10E)-eicosatrienoate. The enzyme catalyses (15R)-hydroperoxy-(5Z,8Z,11Z,13E)-eicosatetraenoate = 15-oxo-(5Z,8Z,11Z,13E)-eicosatetraenoate + H2O. It catalyses the reaction (15S)-hydroperoxy-(5Z,8Z,11Z,13E)-eicosatetraenoate = (14S,15S)-epoxy-(5Z,8Z,10E,12E)-eicosatetraenoate + H2O. The catalysed reaction is (12S)-hydroperoxy-(5Z,8Z,10E,14Z)-eicosatetraenoate = (8S)-hydroxy-(11S,12S)-epoxy-(5Z,9E,14Z)-eicosatrienoate. It carries out the reaction (4Z,7Z,10Z,13Z,16Z)-docosapentaenoate + O2 = 14-hydroperoxy-(4Z,7Z,10Z,12E,16Z)-docosapentaenoate. The enzyme catalyses (7Z,10Z,13Z,16Z,19Z)-docosapentaenoate + O2 = 14-hydroperoxy-(7Z,10Z,12E,16Z,19Z)-docosapentaenoate. It catalyses the reaction (4Z,7Z,10Z,13Z,16Z,19Z)-docosahexaenoate + O2 = (14S)-hydroperoxy-(4Z,7Z,10Z,12E,16Z,19Z)-docosahexaenoate. The catalysed reaction is (4Z,7Z,10Z,13Z,16Z,19Z)-docosahexaenoate + O2 = (17S)-hydroperoxy-(4Z,7Z,10Z,13Z,15E,19Z)-docosahexaenoate. It carries out the reaction (7S)-hydroperoxy-(4Z,8E,10Z,13Z,16Z,19Z)-docosahexaenoate + O2 = (7S,14S)-dihydroperoxy-(4Z,8E,10Z,12E,16Z,19Z)-docosahexaenoate. The enzyme catalyses (7S)-hydroperoxy-(4Z,8E,10Z,13Z,16Z,19Z)-docosahexaenoate + O2 = (7S,17S)-dihydroperoxy-(4Z,8E,10Z,13Z,15E,19Z)-docosahexaenoate. It catalyses the reaction (4Z,7Z,10Z,13Z,16Z,19Z)-docosahexaenoate + O2 = (11S)-hydroperoxy-(4Z,7Z,9E,13Z,16Z,19Z)-docosahexaenoate. The catalysed reaction is N-(5Z,8Z,11Z,14Z)-eicosatetraenoyl-taurine + O2 = N-(12S)-hydroperoxy-(5Z,8Z,10E,14Z)-eicosatetraenoyl-taurine. It carries out the reaction N-(5Z,8Z,11Z,14Z)-eicosatetraenoyl-gamma-aminobutanoate + O2 = N-(12S)-hydroperoxy-(5Z,8Z,10E,14Z)-eicosatetraenoyl-gamma-aminobutanoate. The enzyme catalyses N-(5Z,8Z,11Z,14Z)-eicosatetraenoyl-glycine + O2 = N-(12S)-hydroperoxy-(5Z,8Z,10E,14Z)-eicosatetraenoyl-glycine. It catalyses the reaction N-(5Z,8Z,11Z,14Z)-eicosatetraenoyl-L-alanine + O2 = N-(12S)-hydroperoxy-(5Z,8Z,10E,14Z)-eicosatetraenoyl-alanine. The catalysed reaction is N-(5Z,8Z,11Z,14Z)-eicosatetraenoyl-taurine + O2 = N-(15S)-hydroperoxy-(5Z,8Z,11Z,13E)-eicosatetraenoyl-taurine. It carries out the reaction N-(5Z,8Z,11Z,14Z)-eicosatetraenoyl-gamma-aminobutanoate + O2 = N-(15S)-hydroperoxy-(5Z,8Z,11Z,13E)-eicosatetraenoyl-gamma-aminobutanoate. The enzyme catalyses N-(5Z,8Z,11Z,14Z)-eicosatetraenoyl-glycine + O2 = N-(15S)-hydroperoxy-(5Z,8Z,11Z,13E)-eicosatetraenoyl-glycine. It catalyses the reaction N-(5Z,8Z,11Z,14Z)-eicosatetraenoyl-L-alanine + O2 = N-(15S)-hydroperoxy-(5Z,8Z,11Z,13E)-eicosatetraenoyl-alanine. Its pathway is lipid metabolism; hydroperoxy eicosatetraenoic acid biosynthesis. Non-heme iron-containing dioxygenase that catalyzes the stereo-specific peroxidation of free and esterified polyunsaturated fatty acids generating a spectrum of bioactive lipid mediators. It inserts peroxyl groups at C12 or C15 of arachidonate ((5Z,8Z,11Z,14Z)-eicosatetraenoate) producing both 12-hydroperoxyeicosatetraenoate/12-HPETE and 15-hydroperoxyeicosatetraenoate/15-HPETE. It may then act on 12-HPETE to produce hepoxilins, which may show pro-inflammatory properties. Can also peroxidize linoleate ((9Z,12Z)-octadecadienoate) to 13-hydroperoxyoctadecadienoate. May participate in the sequential oxidations of DHA ((4Z,7Z,10Z,13Z,16Z,19Z)-docosahexaenoate) to generate specialized pro-resolving mediators (SPMs)like resolvin D5 ((7S,17S)-diHPDHA) and (7S,14S)-diHPDHA, that actively down-regulate the immune response and have anti-aggregation properties with platelets. Can convert epoxy fatty acids to hydroperoxy-epoxides derivatives followed by an intramolecular nucleophilic substitution leading to the formation of monocyclic endoperoxides. Plays an important role during the maintenance of self-tolerance by peroxidizing membrane-bound phosphatidylethanolamine which can then signal the sorting process for clearance of apoptotic cells during inflammation and prevent an autoimmune response. In addition to its role in the immune and inflammatory responses, this enzyme may play a role in epithelial wound healing in the cornea through production of lipoxin A4 (LXA(4)) and docosahexaenoic acid-derived neuroprotectin D1 (NPD1; 10R,17S-HDHA), both lipid autacoids exhibit anti-inflammatory and neuroprotective properties. Furthermore, it may regulate actin polymerization which is crucial for several biological processes such as the phagocytosis of apoptotic cells. It is also implicated in the generation of endogenous ligands for peroxisome proliferator activated receptor (PPAR-gamma), hence modulating macrophage development and function. It may also exert a negative effect on skeletal development by regulating bone mass through this pathway. As well as participates in ER stress and downstream inflammation in adipocytes, pancreatic islets, and liver. Finally, it is also involved in the cellular response to IL13/interleukin-13. The chain is Polyunsaturated fatty acid lipoxygenase ALOX15 from Bos taurus (Bovine).